An 894-amino-acid chain; its full sequence is Alanine--tRNA ligase (894 aa).

Histidine 587, histidine 591, cysteine 691, and histidine 695 together coordinate Zn(2+). The interval 739 to 758 is disordered; that stretch reads AEGDRAAEEAKGRLQEERDA.

Belongs to the class-II aminoacyl-tRNA synthetase family. Zn(2+) is required as a cofactor.

The protein resides in the cytoplasm. It catalyses the reaction tRNA(Ala) + L-alanine + ATP = L-alanyl-tRNA(Ala) + AMP + diphosphate. Functionally, catalyzes the attachment of alanine to tRNA(Ala) in a two-step reaction: alanine is first activated by ATP to form Ala-AMP and then transferred to the acceptor end of tRNA(Ala). Also edits incorrectly charged Ser-tRNA(Ala) and Gly-tRNA(Ala) via its editing domain. This is Alanine--tRNA ligase from Cenarchaeum symbiosum (strain A).